A 79-amino-acid polypeptide reads, in one-letter code: uncharacterized protein (79 aa).

The N-terminal stretch at 1–19 is a signal peptide; the sequence is MKYVALAFVLSLVILQISA. A disordered region spans residues 52 to 71; sequence RGRKSRTQSGRNQGKSTSDS. Residues 58-71 show a composition bias toward polar residues; it reads TQSGRNQGKSTSDS.

In terms of tissue distribution, nacreous layer of shell (at protein level). Expressed primarily in the mantle with highest level in the mantle pallium and lower level in the mantle edge.

The protein resides in the secreted. This is an uncharacterized protein from Margaritifera margaritifera (Freshwater pearl mussel).